A 376-amino-acid chain; its full sequence is RING-H2 finger protein ATL46 (376 aa).

The chain crosses the membrane as a helical span at residues valine 45 to leucine 65. The segment at cysteine 143–arginine 185 adopts an RING-type; atypical zinc-finger fold. Basic and acidic residues-rich tracts occupy residues arginine 296–glutamate 305 and aspartate 358–arginine 376. Disordered stretches follow at residues arginine 296 to threonine 320 and phenylalanine 341 to arginine 376.

It belongs to the RING-type zinc finger family. ATL subfamily.

Its subcellular location is the membrane. It catalyses the reaction S-ubiquitinyl-[E2 ubiquitin-conjugating enzyme]-L-cysteine + [acceptor protein]-L-lysine = [E2 ubiquitin-conjugating enzyme]-L-cysteine + N(6)-ubiquitinyl-[acceptor protein]-L-lysine.. Its pathway is protein modification; protein ubiquitination. The chain is RING-H2 finger protein ATL46 (ATL46) from Arabidopsis thaliana (Mouse-ear cress).